A 333-amino-acid chain; its full sequence is L-lactate dehydrogenase B chain (333 aa).

NAD(+)-binding positions include G29–K57 and R99. The substrate site is built by R106, N138, and R169. N138 lines the NAD(+) pocket. H193 acts as the Proton acceptor in catalysis. Position 248 (T248) interacts with substrate.

It belongs to the LDH/MDH superfamily. LDH family. In terms of assembly, homotetramer.

Its subcellular location is the cytoplasm. It carries out the reaction (S)-lactate + NAD(+) = pyruvate + NADH + H(+). It functions in the pathway fermentation; pyruvate fermentation to lactate; (S)-lactate from pyruvate: step 1/1. Its function is as follows. Interconverts simultaneously and stereospecifically pyruvate and lactate with concomitant interconversion of NADH and NAD(+). This is L-lactate dehydrogenase B chain (LDHB) from Pelodiscus sinensis japonicus (Chinese soft-shelled turtle).